The sequence spans 402 residues: MAT+ sexual cell fertilization-promoting factor (402 aa).

Residues 169–237 (IPRPPNAYIL…KLMSAHPHYR (69 aa)) constitute a DNA-binding region (HMG box). The segment at 246–272 (IRRRAPRRNRAQEVANASPIGENSGAP) is disordered.

The protein localises to the nucleus. Its function is as follows. Controls fertilization, probably by determining the mating type. In Podospora anserina (Pleurage anserina), this protein is MAT+ sexual cell fertilization-promoting factor (FPR1).